We begin with the raw amino-acid sequence, 244 residues long: 5-oxoprolinase subunit A (244 aa).

The protein belongs to the LamB/PxpA family. In terms of assembly, forms a complex composed of PxpA, PxpB and PxpC.

The catalysed reaction is 5-oxo-L-proline + ATP + 2 H2O = L-glutamate + ADP + phosphate + H(+). In terms of biological role, catalyzes the cleavage of 5-oxoproline to form L-glutamate coupled to the hydrolysis of ATP to ADP and inorganic phosphate. This Shigella flexneri protein is 5-oxoprolinase subunit A.